A 202-amino-acid chain; its full sequence is Peptide deformylase 2 (202 aa).

Cys123 and His165 together coordinate Fe cation. Glu166 is an active-site residue. His169 is a binding site for Fe cation.

It belongs to the polypeptide deformylase family. Fe(2+) is required as a cofactor.

The enzyme catalyses N-terminal N-formyl-L-methionyl-[peptide] + H2O = N-terminal L-methionyl-[peptide] + formate. Its function is as follows. Removes the formyl group from the N-terminal Met of newly synthesized proteins. Requires at least a dipeptide for an efficient rate of reaction. N-terminal L-methionine is a prerequisite for activity but the enzyme has broad specificity at other positions. The chain is Peptide deformylase 2 from Vibrio vulnificus (strain YJ016).